Reading from the N-terminus, the 189-residue chain is Elongation factor P (189 aa).

At Lys-34 the chain carries N6-(3,6-diaminohexanoyl)-5-hydroxylysine.

The protein belongs to the elongation factor P family. In terms of processing, may be beta-lysylated on the epsilon-amino group of Lys-34 by the combined action of EpmA and EpmB, and then hydroxylated on the C5 position of the same residue by EpmC (if this protein is present). Lysylation is critical for the stimulatory effect of EF-P on peptide-bond formation. The lysylation moiety may extend toward the peptidyltransferase center and stabilize the terminal 3-CCA end of the tRNA. Hydroxylation of the C5 position on Lys-34 may allow additional potential stabilizing hydrogen-bond interactions with the P-tRNA.

It is found in the cytoplasm. Its pathway is protein biosynthesis; polypeptide chain elongation. In terms of biological role, involved in peptide bond synthesis. Alleviates ribosome stalling that occurs when 3 or more consecutive Pro residues or the sequence PPG is present in a protein, possibly by augmenting the peptidyl transferase activity of the ribosome. Modification of Lys-34 is required for alleviation. The polypeptide is Elongation factor P (Dichelobacter nodosus (strain VCS1703A)).